Reading from the N-terminus, the 167-residue chain is Crossover junction endodeoxyribonuclease RuvC (167 aa).

Residues aspartate 7, glutamate 67, and aspartate 139 contribute to the active site. The Mg(2+) site is built by aspartate 7, glutamate 67, and aspartate 139.

It belongs to the RuvC family. As to quaternary structure, homodimer which binds Holliday junction (HJ) DNA. The HJ becomes 2-fold symmetrical on binding to RuvC with unstacked arms; it has a different conformation from HJ DNA in complex with RuvA. In the full resolvosome a probable DNA-RuvA(4)-RuvB(12)-RuvC(2) complex forms which resolves the HJ. Mg(2+) serves as cofactor.

It localises to the cytoplasm. The enzyme catalyses Endonucleolytic cleavage at a junction such as a reciprocal single-stranded crossover between two homologous DNA duplexes (Holliday junction).. The RuvA-RuvB-RuvC complex processes Holliday junction (HJ) DNA during genetic recombination and DNA repair. Endonuclease that resolves HJ intermediates. Cleaves cruciform DNA by making single-stranded nicks across the HJ at symmetrical positions within the homologous arms, yielding a 5'-phosphate and a 3'-hydroxyl group; requires a central core of homology in the junction. The consensus cleavage sequence is 5'-(A/T)TT(C/G)-3'. Cleavage occurs on the 3'-side of the TT dinucleotide at the point of strand exchange. HJ branch migration catalyzed by RuvA-RuvB allows RuvC to scan DNA until it finds its consensus sequence, where it cleaves and resolves the cruciform DNA. This Zymomonas mobilis subsp. mobilis (strain ATCC 31821 / ZM4 / CP4) protein is Crossover junction endodeoxyribonuclease RuvC.